Reading from the N-terminus, the 169-residue chain is CKLF-like MARVEL transmembrane domain-containing protein 1 (169 aa).

The MARVEL domain maps to 17 to 135; that stretch reads NLKQPETAAA…DAFVVTTKMR (119 aa). Helical transmembrane passes span 22–42, 46–66, 79–99, and 110–130; these read ETAAALSLILGALACFIITQA, FITITSLEICIVVFFILIYVL, LLDLTNSIITAVFLSVVAILA, and YVGGSLCLTAVIVCCIDAFVV.

This sequence belongs to the chemokine-like factor family. In terms of tissue distribution, highly expressed in testis.

It is found in the membrane. This Homo sapiens (Human) protein is CKLF-like MARVEL transmembrane domain-containing protein 1 (CMTM1).